We begin with the raw amino-acid sequence, 490 residues long: Cytochrome P450 monooxygenase anuE (490 aa).

Position 405 (cysteine 405) interacts with heme.

Belongs to the cytochrome P450 family. Heme serves as cofactor.

The catalysed reaction is 2-hydroxymethyl-3-pentylphenol + reduced [NADPH--hemoprotein reductase] + O2 = (8S)-annullatin E + oxidized [NADPH--hemoprotein reductase] + H2O + H(+). The protein operates within secondary metabolite biosynthesis. Cytochrome P450 monooxygenase; part of the gene cluster that mediates the biosynthesis of annullatin D, an alkylated aromatic polyketide with a fused dihydrobenzofuran lactone ring system that exhibits potent agonistic activities toward the cannabinoid receptors. Within the pathway, anuE catalyzes the hydroxylation of 2-hydroxymethyl-3-pentylphenol at the side chain to produce (8S)-annullatin E. The annullatin backbone 2-hydroxymethyl-3-pentylphenol is assembled from one acetyl-CoA starter unit and 5 malonyl-CoA elongation units by cooperation of the highly reducing polyketide synthase anuA, the short-chain dehydrogenase anuB and the oxidoreductase anuC, before being hydroxylated at the C-5 alkyl chain by the cytochrome P450 monooxygenase anuE to form (8S)-annullatin E. The prenyltransferase anuH subsequently installs one isoprenyl group at the benzene ring to form (8S)-annullatin J. Enzymatic or nonenzymatic dihydro-benzofuran ring formation between the prenyl and the phenolic hydroxyl groups in (8S)-annullatin J results in two diastereomers (2S,9S)-annullatin H and compound 12. The intermediate (2S,9S)-annullatin H is then converted to (2S,9S)-annullatin D by the FAD-linked oxidoreductase anuG-catalyzed five-member lactone ring formation. The isomer 12 acts as a substrate for the short-chain dehydrogenase anuF and is oxidized to (2R)-annullatin F, which is subsequently acetylated by an acetyltransferase leading to (2R)-annullatin G formation. The remaining enzymes identified within the cluster, anuD, anuI and anuJ, seem not to be involved in annullatin biosynthesis. This is Cytochrome P450 monooxygenase anuE from Penicillium roqueforti (strain FM164).